We begin with the raw amino-acid sequence, 564 residues long: Dicarboxylate transporter 2, chloroplastic (564 aa).

The N-terminal 22 residues, 1–22 (MESLALLPTLSLSTTTTTSKAT), are a transit peptide targeting the chloroplast. The disordered stretch occupies residues 35–58 (RRPHLSLSLSSTPKPTLTFSSHSH). The segment covering 39-58 (LSLSLSSTPKPTLTFSSHSH) has biased composition (low complexity). Transmembrane regions (helical) follow at residues 94–114 (GAKL…RFAV), 127–147 (LLAI…PVGA), 166–186 (TAFC…FFFA), 235–255 (AGGI…SLPG), 262–282 (LGTY…ALFL), 307–327 (VFWL…TPLI), 356–376 (VTKN…LWVF), 380–400 (IGVS…LLGV), 415–435 (TLAW…LGIV), 451–471 (LSWP…HYLF), 484–504 (AFLA…LALA), and 538–558 (MGFI…GVWW).

Belongs to the SLC13A/DASS transporter (TC 2.A.47) family. DIT1 subfamily. Expressed in leaves.

The protein localises to the plastid. It is found in the chloroplast inner membrane. Glutamate/malate translocator involved with DIT1 in primary ammonia assimilation and in the re-assimilation of ammonia generated by the photorespiratory pathway. Exports the end product of ammonia assimilation, glutamate, from plastids to the cytosol. The precursor for ammonia assimilation, 2-oxoglutarate, is imported from the cytosol by DIT1. In Spinacia oleracea (Spinach), this protein is Dicarboxylate transporter 2, chloroplastic (DIT2).